We begin with the raw amino-acid sequence, 618 residues long: DNA mismatch repair protein MutL (618 aa).

Residues 371 to 401 form a disordered region; it reads AREPATPRYSGGASGGSGGRQSVGGWSHAQP. A compositionally biased stretch (gly residues) spans 382 to 392; that stretch reads GASGGSGGRQS.

Belongs to the DNA mismatch repair MutL/HexB family.

In terms of biological role, this protein is involved in the repair of mismatches in DNA. It is required for dam-dependent methyl-directed DNA mismatch repair. May act as a 'molecular matchmaker', a protein that promotes the formation of a stable complex between two or more DNA-binding proteins in an ATP-dependent manner without itself being part of a final effector complex. In Salmonella arizonae (strain ATCC BAA-731 / CDC346-86 / RSK2980), this protein is DNA mismatch repair protein MutL.